The following is a 901-amino-acid chain: Protein translocase subunit SecA (901 aa).

ATP contacts are provided by residues Q87, 105 to 109 (GEGKT), and D512. The tract at residues 868 to 901 (AALAAQTGERKVGRNDPCPCGSGKKYKQCHGRLQ) is disordered. Zn(2+) contacts are provided by C885, C887, C896, and H897. The segment covering 891–901 (KKYKQCHGRLQ) has biased composition (basic residues).

The protein belongs to the SecA family. In terms of assembly, monomer and homodimer. Part of the essential Sec protein translocation apparatus which comprises SecA, SecYEG and auxiliary proteins SecDF-YajC and YidC. Zn(2+) serves as cofactor.

It is found in the cell inner membrane. It localises to the cytoplasm. It catalyses the reaction ATP + H2O + cellular proteinSide 1 = ADP + phosphate + cellular proteinSide 2.. Functionally, part of the Sec protein translocase complex. Interacts with the SecYEG preprotein conducting channel. Has a central role in coupling the hydrolysis of ATP to the transfer of proteins into and across the cell membrane, serving both as a receptor for the preprotein-SecB complex and as an ATP-driven molecular motor driving the stepwise translocation of polypeptide chains across the membrane. The chain is Protein translocase subunit SecA from Escherichia coli O45:K1 (strain S88 / ExPEC).